A 287-amino-acid chain; its full sequence is ATP synthase gamma chain (287 aa).

This sequence belongs to the ATPase gamma chain family. As to quaternary structure, F-type ATPases have 2 components, CF(1) - the catalytic core - and CF(0) - the membrane proton channel. CF(1) has five subunits: alpha(3), beta(3), gamma(1), delta(1), epsilon(1). CF(0) has three main subunits: a, b and c.

The protein localises to the cell inner membrane. Its function is as follows. Produces ATP from ADP in the presence of a proton gradient across the membrane. The gamma chain is believed to be important in regulating ATPase activity and the flow of protons through the CF(0) complex. The protein is ATP synthase gamma chain of Edwardsiella ictaluri (strain 93-146).